Consider the following 126-residue polypeptide: Aspartate 1-decarboxylase (126 aa).

Ser-25 (schiff-base intermediate with substrate; via pyruvic acid) is an active-site residue. Ser-25 carries the pyruvic acid (Ser) modification. Residue Thr-57 coordinates substrate. Residue Tyr-58 is the Proton donor of the active site. 73-75 (GGA) is a binding site for substrate.

Belongs to the PanD family. As to quaternary structure, heterooctamer of four alpha and four beta subunits. Requires pyruvate as cofactor. In terms of processing, is synthesized initially as an inactive proenzyme, which is activated by self-cleavage at a specific serine bond to produce a beta-subunit with a hydroxyl group at its C-terminus and an alpha-subunit with a pyruvoyl group at its N-terminus.

The protein localises to the cytoplasm. The enzyme catalyses L-aspartate + H(+) = beta-alanine + CO2. Its pathway is cofactor biosynthesis; (R)-pantothenate biosynthesis; beta-alanine from L-aspartate: step 1/1. Catalyzes the pyruvoyl-dependent decarboxylation of aspartate to produce beta-alanine. This chain is Aspartate 1-decarboxylase, found in Acinetobacter baylyi (strain ATCC 33305 / BD413 / ADP1).